A 220-amino-acid polypeptide reads, in one-letter code: UPF0319 protein YccT (220 aa).

The signal sequence occupies residues M1 to A20.

Belongs to the UPF0319 family.

This chain is UPF0319 protein YccT, found in Escherichia fergusonii (strain ATCC 35469 / DSM 13698 / CCUG 18766 / IAM 14443 / JCM 21226 / LMG 7866 / NBRC 102419 / NCTC 12128 / CDC 0568-73).